The primary structure comprises 892 residues: Alanine--tRNA ligase (892 aa).

The Zn(2+) site is built by histidine 565, histidine 569, cysteine 678, and histidine 682. The disordered stretch occupies residues 857-876 (GGKGGGGRPDMAQAGGPDGA).

This sequence belongs to the class-II aminoacyl-tRNA synthetase family. Zn(2+) is required as a cofactor.

The protein resides in the cytoplasm. It catalyses the reaction tRNA(Ala) + L-alanine + ATP = L-alanyl-tRNA(Ala) + AMP + diphosphate. In terms of biological role, catalyzes the attachment of alanine to tRNA(Ala) in a two-step reaction: alanine is first activated by ATP to form Ala-AMP and then transferred to the acceptor end of tRNA(Ala). Also edits incorrectly charged Ser-tRNA(Ala) and Gly-tRNA(Ala) via its editing domain. This chain is Alanine--tRNA ligase, found in Bradyrhizobium diazoefficiens (strain JCM 10833 / BCRC 13528 / IAM 13628 / NBRC 14792 / USDA 110).